The following is a 246-amino-acid chain: Ribosomal RNA small subunit methyltransferase J (246 aa).

Residues 115 to 116 (ER) and D169 each bind S-adenosyl-L-methionine.

Belongs to the methyltransferase superfamily. RsmJ family.

It localises to the cytoplasm. The catalysed reaction is guanosine(1516) in 16S rRNA + S-adenosyl-L-methionine = N(2)-methylguanosine(1516) in 16S rRNA + S-adenosyl-L-homocysteine + H(+). Specifically methylates the guanosine in position 1516 of 16S rRNA. The chain is Ribosomal RNA small subunit methyltransferase J from Buchnera aphidicola subsp. Acyrthosiphon pisum (strain APS) (Acyrthosiphon pisum symbiotic bacterium).